Consider the following 505-residue polypeptide: Glycerol kinase (505 aa).

Thr14 is an ADP binding site. ATP is bound by residues Thr14, Thr15, and Ser16. Residue Thr14 participates in sn-glycerol 3-phosphate binding. Arg18 lines the ADP pocket. Positions 84, 85, 136, and 246 each coordinate sn-glycerol 3-phosphate. Glycerol is bound by residues Arg84, Glu85, Tyr136, Asp246, and Gln247. The ADP site is built by Thr268 and Gly311. 4 residues coordinate ATP: Thr268, Gly311, Gln315, and Gly412. Residues Gly412 and Asn416 each coordinate ADP.

Belongs to the FGGY kinase family.

The catalysed reaction is glycerol + ATP = sn-glycerol 3-phosphate + ADP + H(+). It participates in polyol metabolism; glycerol degradation via glycerol kinase pathway; sn-glycerol 3-phosphate from glycerol: step 1/1. Inhibited by fructose 1,6-bisphosphate (FBP). Functionally, key enzyme in the regulation of glycerol uptake and metabolism. Catalyzes the phosphorylation of glycerol to yield sn-glycerol 3-phosphate. The sequence is that of Glycerol kinase from Vibrio cholerae serotype O1 (strain M66-2).